The chain runs to 398 residues: Succinate--CoA ligase [ADP-forming] subunit beta (398 aa).

One can recognise an ATP-grasp domain in the interval 9–254 (KRLLHEYGAP…LSEEDPKEIE (246 aa)). ATP is bound by residues Lys-46, 53 to 55 (GRG), Glu-109, Ala-112, and Glu-117. Asn-209 and Asp-223 together coordinate Mg(2+). Residues Asn-274 and 331 to 333 (GIM) each bind substrate.

It belongs to the succinate/malate CoA ligase beta subunit family. As to quaternary structure, heterotetramer of two alpha and two beta subunits. The cofactor is Mg(2+).

The catalysed reaction is succinate + ATP + CoA = succinyl-CoA + ADP + phosphate. It catalyses the reaction GTP + succinate + CoA = succinyl-CoA + GDP + phosphate. It functions in the pathway carbohydrate metabolism; tricarboxylic acid cycle; succinate from succinyl-CoA (ligase route): step 1/1. Its function is as follows. Succinyl-CoA synthetase functions in the citric acid cycle (TCA), coupling the hydrolysis of succinyl-CoA to the synthesis of either ATP or GTP and thus represents the only step of substrate-level phosphorylation in the TCA. The beta subunit provides nucleotide specificity of the enzyme and binds the substrate succinate, while the binding sites for coenzyme A and phosphate are found in the alpha subunit. The sequence is that of Succinate--CoA ligase [ADP-forming] subunit beta from Bartonella quintana (strain Toulouse) (Rochalimaea quintana).